The following is a 131-amino-acid chain: UPF0146 protein PYRAB01940 (131 aa).

It belongs to the UPF0146 family.

The protein is UPF0146 protein PYRAB01940 of Pyrococcus abyssi (strain GE5 / Orsay).